A 76-amino-acid polypeptide reads, in one-letter code: Exodeoxyribonuclease 7 small subunit (76 aa).

This sequence belongs to the XseB family. As to quaternary structure, heterooligomer composed of large and small subunits.

It is found in the cytoplasm. It catalyses the reaction Exonucleolytic cleavage in either 5'- to 3'- or 3'- to 5'-direction to yield nucleoside 5'-phosphates.. Functionally, bidirectionally degrades single-stranded DNA into large acid-insoluble oligonucleotides, which are then degraded further into small acid-soluble oligonucleotides. This chain is Exodeoxyribonuclease 7 small subunit, found in Bacillus cytotoxicus (strain DSM 22905 / CIP 110041 / 391-98 / NVH 391-98).